The chain runs to 221 residues: uncharacterized protein (221 aa).

This is an uncharacterized protein from Sinorhizobium fredii (strain NBRC 101917 / NGR234).